We begin with the raw amino-acid sequence, 81 residues long: Serine protease inhibitor Kazal-type 2 (81 aa).

The N-terminal stretch at 1-21 is a signal peptide; the sequence is MALAVLRLALLLLAVTFAGPL. Residues 27-81 enclose the Kazal-like domain; that stretch reads KYKTPFCARYQLPGCPRDFNPVCGTDMITYPNECTLCMKIRESGQNIKILRRGPC. Intrachain disulfides connect C33–C63, C41–C60, and C49–C81.

More abundant in epididymis than in testis.

It localises to the secreted. The protein resides in the cytoplasmic vesicle. The protein localises to the secretory vesicle. It is found in the acrosome. Functionally, strong inhibitor of acrosin in male and/or female genital tract. Also inhibits trypsin. In terms of biological role, as a strong inhibitor of acrosin, it is required for normal spermiogenesis. It probably hinders premature activation of proacrosin and other proteases, thus preventing the cascade of events leading to spermiogenesis defects. May be involved in the regulation of serine protease-dependent germ cell apoptosis. It also inhibits trypsin. The chain is Serine protease inhibitor Kazal-type 2 (SPINK2) from Macaca fascicularis (Crab-eating macaque).